Consider the following 187-residue polypeptide: MYMQVETRTSTRLHLKRAPGIRSWSLLVGILSTGLAAAYYSGDSLGWKLFYVTGCLFVAVQNLEDWEEAIFNKSTGKVILKTFSLYKKLLTLLRAGHDQVVVLLKDIQDVNVEEEKVRYFGKGYMVVLRFATGFSHPLTQSAVMGRRSDVEAIAKLITSFLELHRLESPSERSQSSDSEPDGPGGQS.

Residues 20 to 42 (GIRSWSLLVGILSTGLAAAYYSG) form a helical membrane-spanning segment. The disordered stretch occupies residues 167–187 (ESPSERSQSSDSEPDGPGGQS). Phosphoserine is present on residues Ser-168 and Ser-170.

The protein belongs to the CYBC1 family. In terms of assembly, interacts with CYBB; CYBC1 may act as a chaperone stabilizing Cytochrome b-245 heterodimer.

Its subcellular location is the endoplasmic reticulum membrane. Functions as a chaperone necessary for a stable expression of the CYBA and CYBB subunits of the cytochrome b-245 heterodimer. Controls the phagocyte respiratory burst and is essential for innate immunity. The protein is Cytochrome b-245 chaperone 1 of Rattus norvegicus (Rat).